The sequence spans 273 residues: Mannose 6-phosphate receptor-like protein 1 (273 aa).

Residues 1 to 24 (MPTQLQRPLARLLALALLVLLARA) form the signal peptide. Residues 25–176 (AEDEPPFCAV…AAARAAGDRS (152 aa)) lie on the Lumenal side of the membrane. The region spanning 30–168 (PFCAVRNRST…EVRSVHACAA (139 aa)) is the MRH domain. Intrachain disulfides connect Cys-32-Cys-75, Cys-120-Cys-154, and Cys-135-Cys-166. N-linked (GlcNAc...) asparagine glycosylation is found at Asn-36, Asn-51, Asn-69, and Asn-153. The helical transmembrane segment at 177–194 (VLGIFAAILLVFAAVELA) threads the bilayer. Residues 195 to 273 (RRCCAAPLRR…DSLDVRSSGA (79 aa)) are Cytoplasmic-facing.

It belongs to the MRL1/IGF2R family.

It is found in the golgi apparatus. It localises to the trans-Golgi network membrane. Its subcellular location is the endosome membrane. Sorting receptor involved in the transport of vacuolar enzymes from the Golgi complex to the vacuole. The polypeptide is Mannose 6-phosphate receptor-like protein 1 (MRL1) (Eremothecium gossypii (strain ATCC 10895 / CBS 109.51 / FGSC 9923 / NRRL Y-1056) (Yeast)).